Consider the following 174-residue polypeptide: Eukaryotic translation elongation factor 1 epsilon-1 (174 aa).

A2 carries the post-translational modification N-acetylalanine. The N-terminal stretch occupies residues 2–56 (AAAAELRLLEKSLGLKPGNKYSAQGERQIPVLQTNNGPSLMGLSTIATHLVKQAS). The GST C-terminal domain occupies 50 to 173 (HLVKQASKEH…FIKNRLYANS (124 aa)). The segment at 57 to 63 (KEHLLGS) is linker. Residues 64 to 152 (TAEEKAMVQQ…SRWFCHIQHY (89 aa)) are C-terminal. K138 is modified (N6-acetyllysine). Positions 153–169 (PDIRQHLSSIVFIKNRL) form a coiled coil.

As to quaternary structure, part of a multisubunit complex that groups tRNA ligases for Arg (RARS1), Asp (DARS1), Gln (QARS1), Ile (IARS1), Leu (LARS1), Lys (KARS1), Met (MARS1) the bifunctional ligase for Glu and Pro (EPRS1) and the auxiliary subunits AIMP1/p43, AIMP2/p38 and EEF1E1/p18. Can interact simultaneously with MARS1 and EPRS1. Forms a linear complex that contains MARS1, EEF1E1, EPRS1 and AIMP2 that is at the core of the multisubunit complex. Interacts with ATM and ATR. The interaction with ATM, which takes place independently of TP53, is induced by DNA damage that may occur during genotoxic stress or cell growth. The interaction with ATR is enhanced by UV irradiation.

It localises to the cytoplasm. The protein localises to the nucleus. Functionally, positive modulator of ATM response to DNA damage. In Mus musculus (Mouse), this protein is Eukaryotic translation elongation factor 1 epsilon-1 (Eef1e1).